Here is a 457-residue protein sequence, read N- to C-terminus: Cysteine--tRNA ligase (457 aa).

A Zn(2+)-binding site is contributed by Cys-27. Residues 29 to 39 carry the 'HIGH' region motif; sequence PTVYDFAHIGN. Zn(2+) is bound by residues Cys-211, His-236, and Glu-240. Positions 269–273 match the 'KMSKS' region motif; it reads KMSKS. Lys-272 contacts ATP.

The protein belongs to the class-I aminoacyl-tRNA synthetase family. As to quaternary structure, monomer. Zn(2+) is required as a cofactor.

It localises to the cytoplasm. It catalyses the reaction tRNA(Cys) + L-cysteine + ATP = L-cysteinyl-tRNA(Cys) + AMP + diphosphate. In Ehrlichia ruminantium (strain Welgevonden), this protein is Cysteine--tRNA ligase.